The sequence spans 251 residues: Lactose phosphotransferase system repressor (251 aa).

In terms of domain architecture, HTH deoR-type spans 3–58 (KHERLDEIAKLVNKKGTIRTNEIVEGLNVSDMTVRRDLIELENKGILTKIHGGARS). The H-T-H motif DNA-binding region spans 20-39 (IRTNEIVEGLNVSDMTVRRD).

Repressor of the lactose catabolism operon. Galactose-6-phosphate is the inducer. This is Lactose phosphotransferase system repressor (lacR) from Staphylococcus aureus (strain NCTC 8325 / PS 47).